Here is a 32-residue protein sequence, read N- to C-terminus: U13-ctenitoxin-Pn1a (32 aa).

Disulfide bonds link Cys3-Cys17, Cys10-Cys21, and Cys16-Cys30.

Expressed by the venom gland.

The protein localises to the secreted. Acts as a neurotoxin. The sequence is that of U13-ctenitoxin-Pn1a from Phoneutria nigriventer (Brazilian armed spider).